A 313-amino-acid polypeptide reads, in one-letter code: Interferon-inducible double-stranded RNA-dependent protein kinase activator A (313 aa).

Over residues Met-1 to Ser-18 the composition is skewed to basic and acidic residues. The interval Met-1–Phe-21 is disordered. Sufficient for self-association and interaction with TARBP2 stretches follow at residues Met-1 to Ala-103, Asn-102 to Ile-195, and Ile-195 to Lys-313. At Ser-18 the chain carries Phosphoserine. DRBM domains are found at residues Thr-34 to Ala-101, Asn-126 to Asn-194, and Asp-240 to Ile-308. Ser-167, Ser-246, and Ser-287 each carry phosphoserine.

It belongs to the PRKRA family. As to quaternary structure, homodimer. Interacts with EIF2AK2/PKR through its DRBM domains. Interacts with DICER1, AGO2 and TARBP2. Also able to interact with dsRNA. Interacts with UBC9. Forms a complex with UBC9 and p53/TP53. Interacts with DUS2L (via DRBM domain). Interacts with RIGI. (Microbial infection) Interacts with ebolavirus protein VP35; this interaction inhibits the interaction between RIGI and PRKRA. In addition, this interaction disrupts the interaction between VP35 and the viral polymerase L. So the VP35-PRKRA interaction plays a critical role in determining the outcome of ebolavirus infection. The interaction PRKRA-VP35 also prevents PRKRA binding to DICER1 and thus allows the virus to counteract host RNA silencing. In terms of assembly, (Microbial infection) Interacts with human herpesvirus 8 protein MTA/ORF57; this interaction inhibits stress granule formation. In terms of processing, phosphorylated at Ser-246 in unstressed cells and at Ser-287 in stressed cells. Phosphorylation at Ser-246 appears to be a prerequisite for subsequent phosphorylation at Ser-287. Phosphorylation at Ser-246 and Ser-287 are necessary for activation of EIF2AK2/PKR under conditions of stress.

It is found in the cytoplasm. Its subcellular location is the perinuclear region. Activates EIF2AK2/PKR in the absence of double-stranded RNA (dsRNA), leading to phosphorylation of EIF2S1/EFI2-alpha and inhibition of translation and induction of apoptosis. Required for siRNA production by DICER1 and for subsequent siRNA-mediated post-transcriptional gene silencing. Does not seem to be required for processing of pre-miRNA to miRNA by DICER1. Promotes UBC9-p53/TP53 association and sumoylation and phosphorylation of p53/TP53 at 'Lys-386' at 'Ser-392' respectively and enhances its activity in a EIF2AK2/PKR-dependent manner. This chain is Interferon-inducible double-stranded RNA-dependent protein kinase activator A (PRKRA), found in Homo sapiens (Human).